Consider the following 208-residue polypeptide: Protein-L-isoaspartate O-methyltransferase (208 aa).

The active site involves Ser59.

Belongs to the methyltransferase superfamily. L-isoaspartyl/D-aspartyl protein methyltransferase family.

The protein localises to the cytoplasm. The enzyme catalyses [protein]-L-isoaspartate + S-adenosyl-L-methionine = [protein]-L-isoaspartate alpha-methyl ester + S-adenosyl-L-homocysteine. In terms of biological role, catalyzes the methyl esterification of L-isoaspartyl residues in peptides and proteins that result from spontaneous decomposition of normal L-aspartyl and L-asparaginyl residues. It plays a role in the repair and/or degradation of damaged proteins. The polypeptide is Protein-L-isoaspartate O-methyltransferase (Yersinia pseudotuberculosis serotype O:1b (strain IP 31758)).